Here is a 179-residue protein sequence, read N- to C-terminus: Nuclear transcription factor Y subunit B (179 aa).

Residues 1–32 (MAEAPASPGGGGGSHESGSPRGGGGGGSVREQ) are disordered. Residues 8-28 (PGGGGGSHESGSPRGGGGGGS) are compositionally biased toward gly residues. Residues 36-42 (LPIANIS) mediate DNA binding. The tract at residues 63-74 (VQECVSEFISFI) is subunit association domain (SAD). Residues 147–179 (SSSAAEGMGQQGAYNQGMGYMQPQYHNGDISNV) form a disordered region.

This sequence belongs to the NFYB/HAP3 subunit family. Heterotrimeric transcription factor composed of three components, NF-YA, NF-YB and NF-YC. NF-YB and NF-YC must interact and dimerize for NF-YA association and DNA binding.

Its subcellular location is the nucleus. Component of the NF-Y/HAP transcription factor complex. The NF-Y complex stimulates the transcription of various genes by recognizing and binding to a CCAAT motif in promoters. The chain is Nuclear transcription factor Y subunit B (NFY2) from Zea mays (Maize).